The sequence spans 352 residues: Delta(7)-sterol 5(6)-desaturas erg3A (352 aa).

N-linked (GlcNAc...) asparagine glycosylation occurs at Asn39. A run of 3 helical transmembrane segments spans residues 82-102 (FLSF…ISAT), 128-147 (IAQT…PFLV), and 167-187 (YYSI…IYWI). The region spanning 174–299 (PLFIAFTDFC…FTTLWDRLGG (126 aa)) is the Fatty acid hydroxylase domain. Residues 188–192 (HRGLH) carry the Histidine box-1 motif. The Histidine box-2 signature appears at 201 to 205 (HKPHH). A helical membrane pass occupies residues 231–251 (HVFPFIFPLQKLAYVFLFGFI). The Histidine box-3 motif lies at 276–280 (HTMHH).

Belongs to the sterol desaturase family. It depends on Fe cation as a cofactor.

The protein resides in the endoplasmic reticulum membrane. Delta(7)-sterol 5(6)-desaturase; part of the third module of ergosterol biosynthesis pathway that includes the late steps of the pathway. Erg3A is a minor delta(7)-sterol 5(6)-desaturase within the ergosterol pathway, erg3B being the major one. The third module or late pathway involves the ergosterol synthesis itself through consecutive reactions that mainly occur in the endoplasmic reticulum (ER) membrane. Firstly, the squalene synthase erg9 catalyzes the condensation of 2 farnesyl pyrophosphate moieties to form squalene, which is the precursor of all steroids. Squalene synthase is crucial for balancing the incorporation of farnesyl diphosphate (FPP) into sterol and nonsterol isoprene synthesis. Secondly, squalene is converted into lanosterol by the consecutive action of the squalene epoxidase erg1 and the lanosterol synthase erg7. Then, the delta(24)-sterol C-methyltransferase erg6 methylates lanosterol at C-24 to produce eburicol. Eburicol is the substrate of the sterol 14-alpha demethylase encoded by cyp51A and cyp51B, to yield 4,4,24-trimethyl ergosta-8,14,24(28)-trienol. The C-14 reductase erg24 then reduces the C14=C15 double bond which leads to 4,4-dimethylfecosterol. A sequence of further demethylations at C-4, involving the C-4 demethylation complex containing the C-4 methylsterol oxidases erg25A or erg25B, the sterol-4-alpha-carboxylate 3-dehydrogenase erg26 and the 3-keto-steroid reductase erg27, leads to the production of fecosterol via 4-methylfecosterol. The C-8 sterol isomerase erg2 then catalyzes the reaction which results in unsaturation at C-7 in the B ring of sterols and thus converts fecosterol to episterol. The sterol-C5-desaturase erg3B then catalyzes the introduction of a C-5 double bond in the B ring to produce 5-dehydroepisterol. The 2 other sterol-C5-desaturases, erg3A and erg3C, seem to be less important in ergosterol biosynthesis. The C-22 sterol desaturase erg5 further converts 5-dehydroepisterol into ergosta-5,7,22,24(28)-tetraen-3beta-ol by forming the C-22(23) double bond in the sterol side chain. Finally, ergosta-5,7,22,24(28)-tetraen-3beta-ol is substrate of the C-24(28) sterol reductases erg4A and erg4B to produce ergosterol. Possible alternative sterol biosynthetic pathways might exist from fecosterol to ergosterol, depending on the activities of the erg3 isoforms. This is Delta(7)-sterol 5(6)-desaturas erg3A from Aspergillus fumigatus (strain ATCC MYA-4609 / CBS 101355 / FGSC A1100 / Af293) (Neosartorya fumigata).